Here is a 157-residue protein sequence, read N- to C-terminus: 2-C-methyl-D-erythritol 2,4-cyclodiphosphate synthase (157 aa).

2 residues coordinate a divalent metal cation: Asp8 and His10. 4-CDP-2-C-methyl-D-erythritol 2-phosphate contacts are provided by residues Asp8–His10 and His34–Ser35. His42 lines the a divalent metal cation pocket. 4-CDP-2-C-methyl-D-erythritol 2-phosphate contacts are provided by residues Asp56–Gly58, Thr132–Glu135, and Arg142.

This sequence belongs to the IspF family. In terms of assembly, homotrimer. The cofactor is a divalent metal cation.

It carries out the reaction 4-CDP-2-C-methyl-D-erythritol 2-phosphate = 2-C-methyl-D-erythritol 2,4-cyclic diphosphate + CMP. The protein operates within isoprenoid biosynthesis; isopentenyl diphosphate biosynthesis via DXP pathway; isopentenyl diphosphate from 1-deoxy-D-xylulose 5-phosphate: step 4/6. Its function is as follows. Involved in the biosynthesis of isopentenyl diphosphate (IPP) and dimethylallyl diphosphate (DMAPP), two major building blocks of isoprenoid compounds. Catalyzes the conversion of 4-diphosphocytidyl-2-C-methyl-D-erythritol 2-phosphate (CDP-ME2P) to 2-C-methyl-D-erythritol 2,4-cyclodiphosphate (ME-CPP) with a corresponding release of cytidine 5-monophosphate (CMP). The chain is 2-C-methyl-D-erythritol 2,4-cyclodiphosphate synthase from Pelodictyon phaeoclathratiforme (strain DSM 5477 / BU-1).